The primary structure comprises 359 residues: Protein HEXIM1 (359 aa).

The tract at residues 1–163 is disordered; it reads MAEPFLSEYQ…RRRPSKKKRH (163 aa). Positions 9–19 are enriched in polar residues; the sequence is YQHQPQTSNCT. 2 stretches are compositionally biased toward basic and acidic residues: residues 34–47 and 84–93; these read PGAEERVPEEDSRW and CLREGEKGQN. A phosphoserine mark is found at S97 and S98. The span at 148-163 shows a compositional bias: basic residues; that stretch reads LGKKKHRRRPSKKKRH. The segment at 150–177 is basic region; mediates nuclear localization and interaction with 7SK snRNA and NR3C1; it reads KKKHRRRPSKKKRHWKPYYKLTWEEKKK. The interval 202–205 is interaction with P-TEFb; the sequence is PYNT. Positions 210-250 are autoinhibitory acidic region; in absence of 7SK snRNA interacts with the basic region preventing interaction with P-TEFb and modulating subcellular localization; that stretch reads MDDHDQEEPDLKTGLYSKRAAAKSDDTSDDDFMEEGGEEDG. Positions 213–262 are disordered; it reads HDQEEPDLKTGLYSKRAAAKSDDTSDDDFMEEGGEEDGGSDGMGGDGSEF. Phosphoserine is present on S233. T236 bears the Phosphothreonine mark. Acidic residues predominate over residues 236–251; it reads TSDDDFMEEGGEEDGG. Residues S237, S252, and S260 each carry the phosphoserine modification. A coiled-coil region spans residues 283 to 349; it reads SKQELIKEYL…LTENELHRQQ (67 aa). A mediates interaction with CCNT1 region spans residues 286 to 314; the sequence is ELIKEYLELEKCLSRMEDENNRLRLESKR. Positions 310-355 are required for inhibition of ESR1-dependent transcription; sequence LESKRLGGDDARVRELELELDRLRAENLQLLTENELHRQQERAPLS.

It belongs to the HEXIM family. Homooligomer and heterooligomer with HEXIM2; probably dimeric. Core component of the 7SK RNP complex, at least composed of 7SK RNA, LARP7, MEPCE, HEXIM1 (or HEXIM2) and P-TEFb (composed of CDK9 and CCNT1/cyclin-T1). Interacts with the N-CoR complex through NCOR1. Interacts with ESR1 and NR3C1. May interact with NF-kappa-B through RELA. Interacts with CCNT2; mediates formation of a tripartite complex with KPNA2. Part of the HDP-RNP complex composed of at least HEXIM1, PRKDC, XRCC5, XRCC6, paraspeckle proteins (SFPQ, NONO, PSPC1, RBM14, and MATR3) and NEAT1 non-coding RNA. Ubiquitously expressed with higher expression in placenta. HEXIM1 and HEXIM2 are differentially expressed. Expressed in endocrine tissues.

It is found in the nucleus. It localises to the cytoplasm. Transcriptional regulator which functions as a general RNA polymerase II transcription inhibitor. Core component of the 7SK RNP complex: in cooperation with 7SK snRNA sequesters P-TEFb in a large inactive 7SK snRNP complex preventing RNA polymerase II phosphorylation and subsequent transcriptional elongation. May also regulate NF-kappa-B, ESR1, NR3C1 and CIITA-dependent transcriptional activity. Plays a role in the regulation of DNA virus-mediated innate immune response by assembling into the HDP-RNP complex, a complex that serves as a platform for IRF3 phosphorylation and subsequent innate immune response activation through the cGAS-STING pathway. The protein is Protein HEXIM1 (HEXIM1) of Homo sapiens (Human).